Reading from the N-terminus, the 293-residue chain is Ribosomal RNA small subunit methyltransferase A (293 aa).

S-adenosyl-L-methionine-binding residues include Asn38, Val40, Gly65, Glu86, Asp116, and Asn133.

It belongs to the class I-like SAM-binding methyltransferase superfamily. rRNA adenine N(6)-methyltransferase family. RsmA subfamily.

The protein localises to the cytoplasm. It carries out the reaction adenosine(1518)/adenosine(1519) in 16S rRNA + 4 S-adenosyl-L-methionine = N(6)-dimethyladenosine(1518)/N(6)-dimethyladenosine(1519) in 16S rRNA + 4 S-adenosyl-L-homocysteine + 4 H(+). In terms of biological role, specifically dimethylates two adjacent adenosines (A1518 and A1519) in the loop of a conserved hairpin near the 3'-end of 16S rRNA in the 30S particle. May play a critical role in biogenesis of 30S subunits. This Paenarthrobacter aurescens (strain TC1) protein is Ribosomal RNA small subunit methyltransferase A.